We begin with the raw amino-acid sequence, 103 residues long: Small ribosomal subunit protein uS14c (103 aa).

The interval 26–56 (SSKKKIRSKVSPLSLSEKTKMQEKLQSLPRN) is disordered.

This sequence belongs to the universal ribosomal protein uS14 family. Part of the 30S ribosomal subunit.

It localises to the plastid. It is found in the chloroplast. Its function is as follows. Binds 16S rRNA, required for the assembly of 30S particles. The sequence is that of Small ribosomal subunit protein uS14c from Saccharum officinarum (Sugarcane).